The following is a 324-amino-acid chain: Elongation factor P--(R)-beta-lysine ligase (324 aa).

Residue 75–77 (SPE) coordinates substrate. ATP contacts are provided by residues 99–101 (RNE) and N108. Y117 is a substrate binding site. 243-244 (EL) is an ATP binding site. E250 lines the substrate pocket. ATP is bound at residue G299.

It belongs to the class-II aminoacyl-tRNA synthetase family. EpmA subfamily. As to quaternary structure, homodimer.

The enzyme catalyses D-beta-lysine + L-lysyl-[protein] + ATP = N(6)-((3R)-3,6-diaminohexanoyl)-L-lysyl-[protein] + AMP + diphosphate + H(+). Functionally, with EpmB is involved in the beta-lysylation step of the post-translational modification of translation elongation factor P (EF-P). Catalyzes the ATP-dependent activation of (R)-beta-lysine produced by EpmB, forming a lysyl-adenylate, from which the beta-lysyl moiety is then transferred to the epsilon-amino group of a conserved specific lysine residue in EF-P. This chain is Elongation factor P--(R)-beta-lysine ligase, found in Vibrio cholerae serotype O1 (strain ATCC 39315 / El Tor Inaba N16961).